A 116-amino-acid chain; its full sequence is Large ribosomal subunit protein bL20 (116 aa).

It belongs to the bacterial ribosomal protein bL20 family.

Functionally, binds directly to 23S ribosomal RNA and is necessary for the in vitro assembly process of the 50S ribosomal subunit. It is not involved in the protein synthesizing functions of that subunit. The sequence is that of Large ribosomal subunit protein bL20 from Helicobacter pylori (strain HPAG1).